We begin with the raw amino-acid sequence, 174 residues long: Protein GrpE (174 aa).

The interval 1–35 (MAQDIKNEEVEEVQEEEVVETAEETTPEKSELDLA) is disordered. Residues 9-25 (EVEEVQEEEVVETAEET) are compositionally biased toward acidic residues. Over residues 26 to 35 (TPEKSELDLA) the composition is skewed to basic and acidic residues.

The protein belongs to the GrpE family. Homodimer.

The protein localises to the cytoplasm. Its function is as follows. Participates actively in the response to hyperosmotic and heat shock by preventing the aggregation of stress-denatured proteins, in association with DnaK and GrpE. It is the nucleotide exchange factor for DnaK and may function as a thermosensor. Unfolded proteins bind initially to DnaJ; upon interaction with the DnaJ-bound protein, DnaK hydrolyzes its bound ATP, resulting in the formation of a stable complex. GrpE releases ADP from DnaK; ATP binding to DnaK triggers the release of the substrate protein, thus completing the reaction cycle. Several rounds of ATP-dependent interactions between DnaJ, DnaK and GrpE are required for fully efficient folding. The polypeptide is Protein GrpE (Streptococcus pneumoniae (strain ATCC BAA-255 / R6)).